The sequence spans 556 residues: 2-isopropylmalate synthase (556 aa).

Residues 33–307 (PIWLSTDLRD…DPQLDFSDID (275 aa)) enclose the Pyruvate carboxyltransferase domain. Mg(2+)-binding residues include Asp-42, His-246, His-248, and Asn-282. The interval 439–556 (ASAPYALKGH…ALSQAESRAA (118 aa)) is regulatory domain.

Belongs to the alpha-IPM synthase/homocitrate synthase family. LeuA type 2 subfamily. In terms of assembly, homodimer. Mg(2+) serves as cofactor.

Its subcellular location is the cytoplasm. It catalyses the reaction 3-methyl-2-oxobutanoate + acetyl-CoA + H2O = (2S)-2-isopropylmalate + CoA + H(+). It participates in amino-acid biosynthesis; L-leucine biosynthesis; L-leucine from 3-methyl-2-oxobutanoate: step 1/4. Its function is as follows. Catalyzes the condensation of the acetyl group of acetyl-CoA with 3-methyl-2-oxobutanoate (2-ketoisovalerate) to form 3-carboxy-3-hydroxy-4-methylpentanoate (2-isopropylmalate). This Ectopseudomonas mendocina (strain ymp) (Pseudomonas mendocina) protein is 2-isopropylmalate synthase.